The primary structure comprises 172 residues: S-ribosylhomocysteine lyase (172 aa).

Fe cation is bound by residues His54, His58, and Cys128.

The protein belongs to the LuxS family. In terms of assembly, homodimer. Fe cation is required as a cofactor.

It catalyses the reaction S-(5-deoxy-D-ribos-5-yl)-L-homocysteine = (S)-4,5-dihydroxypentane-2,3-dione + L-homocysteine. Functionally, involved in the synthesis of autoinducer 2 (AI-2) which is secreted by bacteria and is used to communicate both the cell density and the metabolic potential of the environment. The regulation of gene expression in response to changes in cell density is called quorum sensing. Catalyzes the transformation of S-ribosylhomocysteine (RHC) to homocysteine (HC) and 4,5-dihydroxy-2,3-pentadione (DPD). This chain is S-ribosylhomocysteine lyase, found in Vibrio atlanticus (strain LGP32) (Vibrio splendidus (strain Mel32)).